Consider the following 92-residue polypeptide: UPF0213 protein H16_B0156 (92 aa).

Residues 5 to 80 (SAWYLYLLEC…KRLSSTQKRA (76 aa)) form the GIY-YIG domain.

Belongs to the UPF0213 family.

This Cupriavidus necator (strain ATCC 17699 / DSM 428 / KCTC 22496 / NCIMB 10442 / H16 / Stanier 337) (Ralstonia eutropha) protein is UPF0213 protein H16_B0156.